Here is a 228-residue protein sequence, read N- to C-terminus: Ribose-5-phosphate isomerase A (228 aa).

Residues 29–32, 84–87, and 97–100 contribute to the substrate site; these read TGST, DGAD, and KGGG. Glu-106 (proton acceptor) is an active-site residue. Residue Lys-124 participates in substrate binding.

It belongs to the ribose 5-phosphate isomerase family. In terms of assembly, homodimer.

It carries out the reaction aldehydo-D-ribose 5-phosphate = D-ribulose 5-phosphate. It participates in carbohydrate degradation; pentose phosphate pathway; D-ribose 5-phosphate from D-ribulose 5-phosphate (non-oxidative stage): step 1/1. Functionally, catalyzes the reversible conversion of ribose-5-phosphate to ribulose 5-phosphate. The chain is Ribose-5-phosphate isomerase A from Sphingopyxis alaskensis (strain DSM 13593 / LMG 18877 / RB2256) (Sphingomonas alaskensis).